The following is a 449-amino-acid chain: Exopolygalacturonase X-2 (449 aa).

Residues 1–24 (MGFKRTIGLLLGILLALDQVSVLA) form the signal peptide. N-linked (GlcNAc...) asparagine glycosylation is found at Asn136, Asn172, and Asn208. Residues 240–261 (SDNVVIQNSVINHDDDCVSFKP) form a PbH1 1 repeat. The active-site Proton donor is Asp254. Cys256 and Cys273 form a disulfide bridge. N-linked (GlcNAc...) asparagine glycans are attached at residues Asn262 and Asn274. PbH1 repeat units follow at residues 263-283 (STNI…SVGS) and 294-315 (VSDL…RLKV). His277 is a catalytic residue. 4 N-linked (GlcNAc...) asparagine glycosylation sites follow: Asn301, Asn306, Asn340, and Asn365. Cys403 and Cys409 form a disulfide bridge. 2 N-linked (GlcNAc...) asparagine glycosylation sites follow: Asn416 and Asn421.

The protein belongs to the glycosyl hydrolase 28 family.

The protein resides in the secreted. It catalyses the reaction [(1-&gt;4)-alpha-D-galacturonosyl](n) + H2O = alpha-D-galacturonate + [(1-&gt;4)-alpha-D-galacturonosyl](n-1). Functionally, specific in hydrolyzing the terminal glycosidic bond of polygalacturonic acid and oligogalacturonates. The protein is Exopolygalacturonase X-2 (pgaX-2) of Emericella nidulans (strain FGSC A4 / ATCC 38163 / CBS 112.46 / NRRL 194 / M139) (Aspergillus nidulans).